We begin with the raw amino-acid sequence, 247 residues long: UDP-2,3-diacylglucosamine hydrolase (247 aa).

D8, H10, D41, N79, and H114 together coordinate Mn(2+). Substrate is bound at residue 79 to 80; it reads NR. D122, S160, D171, R174, and H202 together coordinate substrate. Residues H202 and H204 each contribute to the Mn(2+) site.

Belongs to the LpxH family. Mn(2+) is required as a cofactor.

The protein localises to the cell inner membrane. It carries out the reaction UDP-2-N,3-O-bis[(3R)-3-hydroxytetradecanoyl]-alpha-D-glucosamine + H2O = 2-N,3-O-bis[(3R)-3-hydroxytetradecanoyl]-alpha-D-glucosaminyl 1-phosphate + UMP + 2 H(+). It functions in the pathway glycolipid biosynthesis; lipid IV(A) biosynthesis; lipid IV(A) from (3R)-3-hydroxytetradecanoyl-[acyl-carrier-protein] and UDP-N-acetyl-alpha-D-glucosamine: step 4/6. Functionally, hydrolyzes the pyrophosphate bond of UDP-2,3-diacylglucosamine to yield 2,3-diacylglucosamine 1-phosphate (lipid X) and UMP by catalyzing the attack of water at the alpha-P atom. Involved in the biosynthesis of lipid A, a phosphorylated glycolipid that anchors the lipopolysaccharide to the outer membrane of the cell. The polypeptide is UDP-2,3-diacylglucosamine hydrolase (Xanthomonas axonopodis pv. citri (strain 306)).